A 127-amino-acid chain; its full sequence is Protein YwpG (127 aa).

In terms of assembly, interacts with both the D1 and D2 domains of dynamin-like protein DynA.

It localises to the cell membrane. The chain is Protein YwpG (ywpG) from Bacillus subtilis (strain 168).